A 110-amino-acid chain; its full sequence is Large ribosomal subunit protein uL22 (110 aa).

It belongs to the universal ribosomal protein uL22 family. As to quaternary structure, part of the 50S ribosomal subunit.

This protein binds specifically to 23S rRNA; its binding is stimulated by other ribosomal proteins, e.g. L4, L17, and L20. It is important during the early stages of 50S assembly. It makes multiple contacts with different domains of the 23S rRNA in the assembled 50S subunit and ribosome. In terms of biological role, the globular domain of the protein is located near the polypeptide exit tunnel on the outside of the subunit, while an extended beta-hairpin is found that lines the wall of the exit tunnel in the center of the 70S ribosome. The protein is Large ribosomal subunit protein uL22 of Shigella flexneri serotype 5b (strain 8401).